The following is a 55-amino-acid chain: ATP synthase F(0) complex subunit 8 (55 aa).

A helical membrane pass occupies residues 7-24; sequence NPWFFIMLLSWLTFSLII. The disordered stretch occupies residues 35 to 55; sequence NPPSNKTTTHTKTTPWTWPWT. The span at 37 to 55 shows a compositional bias: low complexity; the sequence is PSNKTTTHTKTTPWTWPWT.

The protein belongs to the ATPase protein 8 family. Component of the ATP synthase complex composed at least of ATP5F1A/subunit alpha, ATP5F1B/subunit beta, ATP5MC1/subunit c (homooctomer), MT-ATP6/subunit a, MT-ATP8/subunit 8, ATP5ME/subunit e, ATP5MF/subunit f, ATP5MG/subunit g, ATP5MK/subunit k, ATP5MJ/subunit j, ATP5F1C/subunit gamma, ATP5F1D/subunit delta, ATP5F1E/subunit epsilon, ATP5PF/subunit F6, ATP5PB/subunit b, ATP5PD/subunit d, ATP5PO/subunit OSCP. ATP synthase complex consists of a soluble F(1) head domain (subunits alpha(3) and beta(3)) - the catalytic core - and a membrane F(0) domain - the membrane proton channel (subunits c, a, 8, e, f, g, k and j). These two domains are linked by a central stalk (subunits gamma, delta, and epsilon) rotating inside the F1 region and a stationary peripheral stalk (subunits F6, b, d, and OSCP).

It localises to the mitochondrion membrane. Functionally, subunit 8, of the mitochondrial membrane ATP synthase complex (F(1)F(0) ATP synthase or Complex V) that produces ATP from ADP in the presence of a proton gradient across the membrane which is generated by electron transport complexes of the respiratory chain. ATP synthase complex consist of a soluble F(1) head domain - the catalytic core - and a membrane F(1) domain - the membrane proton channel. These two domains are linked by a central stalk rotating inside the F(1) region and a stationary peripheral stalk. During catalysis, ATP synthesis in the catalytic domain of F(1) is coupled via a rotary mechanism of the central stalk subunits to proton translocation. In vivo, can only synthesize ATP although its ATP hydrolase activity can be activated artificially in vitro. Part of the complex F(0) domain. This chain is ATP synthase F(0) complex subunit 8, found in Chaetura pelagica (Chimney swift).